The primary structure comprises 377 residues: MAADLGPWNDTINGTWDGDELGYRCRFNEDFKYVLLPVSYGVVCVPGLCLNAVALYIFLCRLKTWNASTTYMFHLAVSDALYAASLPLLVYYYARGDHWPFSTVLCKLVRFLFYTNLYCSILFLTCISVHRCLGVLRPLRSLRWGRARYARRVAGAVWVLVLACQAPVLYFVTTSARGGRVTCHDTSAPELFSRFVAYSSVMLGLLFAVPFAVILVCYVLMARRLLKPAYGTSGGLPRAKRKSVRTIAVVLAVFALCFLPFHVTRTLYYSFRSLDLSCHTLNAINMAYKVTRPLASANSCLDPVLYFLAGQRLVRFARDAKPPTGPSPATPARRRLGLRRSDRTDMQRIEDVLGSSEDSRRTESTPAGSENTKDIRL.

At 1–32 (MAADLGPWNDTINGTWDGDELGYRCRFNEDFK) the chain is on the extracellular side. N-linked (GlcNAc...) asparagine glycans are attached at residues N9 and N13. Residues 33 to 59 (YVLLPVSYGVVCVPGLCLNAVALYIFL) traverse the membrane as a helical segment. Topologically, residues 60-70 (CRLKTWNASTT) are cytoplasmic. Residues 71-93 (YMFHLAVSDALYAASLPLLVYYY) traverse the membrane as a helical segment. The Extracellular segment spans residues 94-110 (ARGDHWPFSTVLCKLVR). Cysteines 106 and 183 form a disulfide. Residues 111 to 129 (FLFYTNLYCSILFLTCISV) traverse the membrane as a helical segment. The Cytoplasmic portion of the chain corresponds to 130–152 (HRCLGVLRPLRSLRWGRARYARR). Residues 153–172 (VAGAVWVLVLACQAPVLYFV) form a helical membrane-spanning segment. The Extracellular portion of the chain corresponds to 173–194 (TTSARGGRVTCHDTSAPELFSR). A helical transmembrane segment spans residues 195–220 (FVAYSSVMLGLLFAVPFAVILVCYVL). Over 221 to 246 (MARRLLKPAYGTSGGLPRAKRKSVRT) the chain is Cytoplasmic. A helical transmembrane segment spans residues 247 to 269 (IAVVLAVFALCFLPFHVTRTLYY). At 270-287 (SFRSLDLSCHTLNAINMA) the chain is on the extracellular side. Residues 288 to 309 (YKVTRPLASANSCLDPVLYFLA) form a helical membrane-spanning segment. Over 310-377 (GQRLVRFARD…GSENTKDIRL (68 aa)) the chain is Cytoplasmic. The segment at 318–377 (RDAKPPTGPSPATPARRRLGLRRSDRTDMQRIEDVLGSSEDSRRTESTPAGSENTKDIRL) is disordered. The segment covering 339–363 (RRSDRTDMQRIEDVLGSSEDSRRTE) has biased composition (basic and acidic residues).

It belongs to the G-protein coupled receptor 1 family. In terms of tissue distribution, spleen, testis, kidney, liver, lung, heart and brain.

The protein localises to the cell membrane. Functionally, receptor for ATP and UTP coupled to G-proteins that activate a phosphatidylinositol-calcium second messenger system. The affinity range is UTP = ATP &gt; ATP-gamma-S &gt;&gt; 2-methylthio-ATP = ADP. This chain is P2Y purinoceptor 2 (P2RY2), found in Homo sapiens (Human).